We begin with the raw amino-acid sequence, 348 residues long: Lysophosphatidic acid receptor 2 (348 aa).

Residues 1 to 30 (MGQCYYNETIGFFYNNSGKELSLHWRPKDV) are Extracellular-facing. Asparagine 7 and asparagine 15 each carry an N-linked (GlcNAc...) asparagine glycan. The chain crosses the membrane as a helical span at residues 31-51 (VVVALGLTVSVLVLLTNLLVI). Residues 52–66 (AAIASNRRFHQPIYY) lie on the Cytoplasmic side of the membrane. Residues 67–87 (LLGNLAAADLFAGMAYLFLMF) traverse the membrane as a helical segment. The Extracellular portion of the chain corresponds to 88-104 (HTGPRTARLSIKGWFLR). A helical transmembrane segment spans residues 105–124 (QGLLDTSLTASVATLLAIAV). The Cytoplasmic segment spans residues 125-144 (ERHRSVMAVQLHSRLPRGRV). The chain crosses the membrane as a helical span at residues 145–165 (VTLIVGVWAAALGLGLLPAHF). The Extracellular segment spans residues 166-185 (WHCLCDLDSCSRMVPLFSRS). A helical membrane pass occupies residues 186 to 206 (YLAAWALSSLLVFLLMVAVYT). Over 207–239 (RIFFYVRRRVERMAEHVSCHPRYRETTLSLVKT) the chain is Cytoplasmic. The helical transmembrane segment at 240-260 (VVIILGAFVVCWTPGQVVLLL) threads the bilayer. The Extracellular segment spans residues 261–270 (DGLDCKSCNV). Residues 271 to 291 (LAVEKYFLLLAEANSLVNAVV) traverse the membrane as a helical segment. Over 292–348 (YSCRDAEMRRTFRRLLCCMCLRWSSHKSARYSASAQTGASTRIMLPENGRPLMDSTL) the chain is Cytoplasmic. Cysteine 308 carries S-palmitoyl cysteine lipidation. The PDZ-binding signature appears at 345–348 (DSTL).

Belongs to the G-protein coupled receptor 1 family. Interacts with SLC9A3R2/NHERF2, MAGI3 and PLCB3. Interacts with RALA and GRK2. As to expression, most abundantly expressed in testes, kidney, and embryonic brain. Other organs also express the transcript, including heart, lung, spleen, thymus, stomach, and adult brain. Several have little or no expression, including liver, small intestine, and skeletal muscle.

It localises to the cell surface. The protein resides in the cell membrane. Functionally, receptor for lysophosphatidic acid (LPA), a mediator of diverse cellular activities. Seems to be coupled to the G(i)/G(o), G(12)/G(13), and G(q) families of heteromeric G proteins. Plays a key role in phospholipase C-beta (PLC-beta) signaling pathway Stimulates phospholipase C (PLC) activity in a manner that is independent of RALA activation. This is Lysophosphatidic acid receptor 2 from Mus musculus (Mouse).